The sequence spans 273 residues: Shikimate dehydrogenase (NADP(+)) (273 aa).

Shikimate-binding positions include 15-17 and T62; that span reads SKS. K66 functions as the Proton acceptor in the catalytic mechanism. E78 contributes to the NADP(+) binding site. N87 and D103 together coordinate shikimate. Residues 127-131, 150-155, and M213 contribute to the NADP(+) site; these read GAGGA and NRTQEK. Y215 is a binding site for shikimate. Residue G237 coordinates NADP(+).

The protein belongs to the shikimate dehydrogenase family. Homodimer.

The catalysed reaction is shikimate + NADP(+) = 3-dehydroshikimate + NADPH + H(+). Its pathway is metabolic intermediate biosynthesis; chorismate biosynthesis; chorismate from D-erythrose 4-phosphate and phosphoenolpyruvate: step 4/7. Involved in the biosynthesis of the chorismate, which leads to the biosynthesis of aromatic amino acids. Catalyzes the reversible NADPH linked reduction of 3-dehydroshikimate (DHSA) to yield shikimate (SA). The polypeptide is Shikimate dehydrogenase (NADP(+)) (Shewanella woodyi (strain ATCC 51908 / MS32)).